The chain runs to 784 residues: Probable aminopeptidase 1 (784 aa).

Residues E103 and 236–240 each bind substrate; that span reads GAMEN. H271 contacts Zn(2+). The Proton acceptor role is filled by E272. Positions 275 and 294 each coordinate Zn(2+).

It belongs to the peptidase M1 family. Zn(2+) serves as cofactor.

Its subcellular location is the cytoplasm. The protein is Probable aminopeptidase 1 (ape1) of Saccharolobus solfataricus (strain ATCC 35092 / DSM 1617 / JCM 11322 / P2) (Sulfolobus solfataricus).